A 445-amino-acid chain; its full sequence is Tubulin beta-7 chain (445 aa).

Glutamine 11, glutamate 69, serine 138, glycine 142, threonine 143, glycine 144, asparagine 204, and asparagine 226 together coordinate GTP. Glutamate 69 is a Mg(2+) binding site. The segment at 421 to 445 is disordered; sequence EYQQYQDATAEDEEYEEEEEEEEET. Residues 429–445 are compositionally biased toward acidic residues; that stretch reads TAEDEEYEEEEEEEEET.

It belongs to the tubulin family. In terms of assembly, dimer of alpha and beta chains. A typical microtubule is a hollow water-filled tube with an outer diameter of 25 nm and an inner diameter of 15 nM. Alpha-beta heterodimers associate head-to-tail to form protofilaments running lengthwise along the microtubule wall with the beta-tubulin subunit facing the microtubule plus end conferring a structural polarity. Microtubules usually have 13 protofilaments but different protofilament numbers can be found in some organisms and specialized cells. Mg(2+) serves as cofactor.

It is found in the cytoplasm. The protein resides in the cytoskeleton. Tubulin is the major constituent of microtubules, a cylinder consisting of laterally associated linear protofilaments composed of alpha- and beta-tubulin heterodimers. Microtubules grow by the addition of GTP-tubulin dimers to the microtubule end, where a stabilizing cap forms. Below the cap, tubulin dimers are in GDP-bound state, owing to GTPase activity of alpha-tubulin. The polypeptide is Tubulin beta-7 chain (TUBB7) (Zea mays (Maize)).